A 159-amino-acid chain; its full sequence is Phosphopantetheine adenylyltransferase (159 aa).

Thr9 is a substrate binding site. Residues 9–10 (TF) and His17 each bind ATP. 3 residues coordinate substrate: Lys41, Leu73, and Arg87. ATP-binding positions include 88–90 (GLR), Glu98, and 123–129 (YSFISST).

Belongs to the bacterial CoaD family. In terms of assembly, homohexamer. Requires Mg(2+) as cofactor.

It is found in the cytoplasm. It carries out the reaction (R)-4'-phosphopantetheine + ATP + H(+) = 3'-dephospho-CoA + diphosphate. Its pathway is cofactor biosynthesis; coenzyme A biosynthesis; CoA from (R)-pantothenate: step 4/5. Reversibly transfers an adenylyl group from ATP to 4'-phosphopantetheine, yielding dephospho-CoA (dPCoA) and pyrophosphate. In Pseudomonas syringae pv. syringae (strain B728a), this protein is Phosphopantetheine adenylyltransferase.